The sequence spans 494 residues: Alpha-amylase A (494 aa).

An N-terminal signal peptide occupies residues 1–18 (MFLAKSIVCLALLAVANA). Q19 bears the Pyrrolidone carboxylic acid mark. A disulfide bridge connects residues C46 and C102. Positions 116, 165, and 174 each coordinate Ca(2+). The cysteines at positions 153 and 167 are disulfide-linked. Chloride is bound at residue R202. D204 acts as the Nucleophile in catalysis. H208 is a binding site for Ca(2+). E241 (proton donor) is an active-site residue. Residues N304 and R343 each coordinate chloride. Disulfide bonds link C376–C382 and C448–C460.

Belongs to the glycosyl hydrolase 13 family. As to quaternary structure, monomer. Requires Ca(2+) as cofactor. The cofactor is chloride.

It carries out the reaction Endohydrolysis of (1-&gt;4)-alpha-D-glucosidic linkages in polysaccharides containing three or more (1-&gt;4)-alpha-linked D-glucose units.. The sequence is that of Alpha-amylase A (Amy-p) from Drosophila melanogaster (Fruit fly).